A 465-amino-acid polypeptide reads, in one-letter code: Cysteine--tRNA ligase (465 aa).

Cys-28 is a Zn(2+) binding site. The 'HIGH' region signature appears at 30 to 40 (PTVYNYIHIGN). Positions 208, 233, and 237 each coordinate Zn(2+). A 'KMSKS' region motif is present at residues 265 to 269 (KMSKS). Lys-268 contributes to the ATP binding site.

This sequence belongs to the class-I aminoacyl-tRNA synthetase family. Monomer. It depends on Zn(2+) as a cofactor.

The protein localises to the cytoplasm. The enzyme catalyses tRNA(Cys) + L-cysteine + ATP = L-cysteinyl-tRNA(Cys) + AMP + diphosphate. This is Cysteine--tRNA ligase from Exiguobacterium sibiricum (strain DSM 17290 / CCUG 55495 / CIP 109462 / JCM 13490 / 255-15).